Consider the following 224-residue polypeptide: Deoxyribose-phosphate aldolase (224 aa).

The active-site Proton donor/acceptor is Asp91. Lys152 serves as the catalytic Schiff-base intermediate with acetaldehyde. The active-site Proton donor/acceptor is the Lys181.

Belongs to the DeoC/FbaB aldolase family. DeoC type 1 subfamily.

It is found in the cytoplasm. It carries out the reaction 2-deoxy-D-ribose 5-phosphate = D-glyceraldehyde 3-phosphate + acetaldehyde. Its pathway is carbohydrate degradation; 2-deoxy-D-ribose 1-phosphate degradation; D-glyceraldehyde 3-phosphate and acetaldehyde from 2-deoxy-alpha-D-ribose 1-phosphate: step 2/2. In terms of biological role, catalyzes a reversible aldol reaction between acetaldehyde and D-glyceraldehyde 3-phosphate to generate 2-deoxy-D-ribose 5-phosphate. This Mycoplasma pneumoniae (strain ATCC 29342 / M129 / Subtype 1) (Mycoplasmoides pneumoniae) protein is Deoxyribose-phosphate aldolase.